We begin with the raw amino-acid sequence, 172 residues long: Small ribosomal subunit protein uS5 (172 aa).

An S5 DRBM domain is found at 17-80 (LREKMISVNR…EQARRNMFKV (64 aa)).

Belongs to the universal ribosomal protein uS5 family. Part of the 30S ribosomal subunit. Contacts proteins S4 and S8.

In terms of biological role, with S4 and S12 plays an important role in translational accuracy. Located at the back of the 30S subunit body where it stabilizes the conformation of the head with respect to the body. The chain is Small ribosomal subunit protein uS5 from Paraburkholderia phymatum (strain DSM 17167 / CIP 108236 / LMG 21445 / STM815) (Burkholderia phymatum).